The primary structure comprises 163 residues: 6,7-dimethyl-8-ribityllumazine synthase 1 (163 aa).

5-amino-6-(D-ribitylamino)uracil-binding positions include Phe27, 58 to 60 (ALE), and 87 to 89 (CVV). Residue 92–93 (ET) coordinates (2S)-2-hydroxy-3-oxobutyl phosphate. His95 acts as the Proton donor in catalysis. Asn120 is a binding site for 5-amino-6-(D-ribitylamino)uracil. Arg134 lines the (2S)-2-hydroxy-3-oxobutyl phosphate pocket.

It belongs to the DMRL synthase family.

The catalysed reaction is (2S)-2-hydroxy-3-oxobutyl phosphate + 5-amino-6-(D-ribitylamino)uracil = 6,7-dimethyl-8-(1-D-ribityl)lumazine + phosphate + 2 H2O + H(+). It participates in cofactor biosynthesis; riboflavin biosynthesis; riboflavin from 2-hydroxy-3-oxobutyl phosphate and 5-amino-6-(D-ribitylamino)uracil: step 1/2. In terms of biological role, catalyzes the formation of 6,7-dimethyl-8-ribityllumazine by condensation of 5-amino-6-(D-ribitylamino)uracil with 3,4-dihydroxy-2-butanone 4-phosphate. This is the penultimate step in the biosynthesis of riboflavin. The polypeptide is 6,7-dimethyl-8-ribityllumazine synthase 1 (Rhodopseudomonas palustris (strain ATCC BAA-98 / CGA009)).